The sequence spans 396 residues: Acetate kinase (396 aa).

Asn7 is a Mg(2+) binding site. Lys14 contributes to the ATP binding site. Arg88 contacts substrate. The active-site Proton donor/acceptor is Asp145. ATP-binding positions include His205–Gly209, Asp279–Arg281, and Gly327–Asn331. A Mg(2+)-binding site is contributed by Glu381.

It belongs to the acetokinase family. Homodimer. Requires Mg(2+) as cofactor. The cofactor is Mn(2+).

It is found in the cytoplasm. The enzyme catalyses acetate + ATP = acetyl phosphate + ADP. The protein operates within metabolic intermediate biosynthesis; acetyl-CoA biosynthesis; acetyl-CoA from acetate: step 1/2. Functionally, catalyzes the formation of acetyl phosphate from acetate and ATP. Can also catalyze the reverse reaction. The sequence is that of Acetate kinase from Campylobacter jejuni subsp. doylei (strain ATCC BAA-1458 / RM4099 / 269.97).